A 298-amino-acid polypeptide reads, in one-letter code: Tyrosine recombinase XerC (298 aa).

The region spanning threonine 2–valine 88 is the Core-binding (CB) domain. A Tyr recombinase domain is found at histidine 109–aspartate 288. Residues arginine 148, lysine 172, histidine 240, arginine 243, and histidine 266 contribute to the active site. Catalysis depends on tyrosine 275, which acts as the O-(3'-phospho-DNA)-tyrosine intermediate.

The protein belongs to the 'phage' integrase family. XerC subfamily. Forms a cyclic heterotetrameric complex composed of two molecules of XerC and two molecules of XerD, in which XerC interacts with XerD via its C-terminal region, XerD interacts with XerC via its C-terminal region and so on.

Its subcellular location is the cytoplasm. FtsK may regulate the catalytic switch between XerC and XerD in the heterotetrameric complex during the two steps of the recombination process. In terms of biological role, site-specific tyrosine recombinase, which acts by catalyzing the cutting and rejoining of the recombining DNA molecules. Binds cooperatively to specific DNA consensus sequences that are separated from XerD binding sites by a short central region, forming the heterotetrameric XerC-XerD complex that recombines DNA substrates. The complex is essential to convert dimers of the bacterial chromosome into monomers to permit their segregation at cell division. It also contributes to the segregational stability of plasmids. In the complex XerC specifically exchanges the top DNA strands. This Escherichia coli O139:H28 (strain E24377A / ETEC) protein is Tyrosine recombinase XerC.